We begin with the raw amino-acid sequence, 282 residues long: Putative quercetin 2,3-dioxygenase VC_A0969 (282 aa).

The disordered stretch occupies residues 1–21 (MTKDREIRQTVPAQPTSDGDG). His-59, His-61, His-103, and Glu-105 together coordinate a divalent metal cation.

Belongs to the pirin family. A divalent metal cation serves as cofactor.

The enzyme catalyses quercetin + O2 = 2-(3,4-dihydroxybenzoyloxy)-4,6-dihydroxybenzoate + CO. Its pathway is flavonoid metabolism; quercetin degradation. Functionally, putative quercetin 2,3-dioxygenase. This Vibrio cholerae serotype O1 (strain ATCC 39315 / El Tor Inaba N16961) protein is Putative quercetin 2,3-dioxygenase VC_A0969.